The primary structure comprises 577 residues: Double-stranded RNA-binding protein Staufen homolog 1 (577 aa).

Residue serine 2 is modified to N-acetylserine. The segment covering 34 to 44 (SIPSTTSSLPS) has biased composition (polar residues). The interval 34–55 (SIPSTTSSLPSENAGRPIQNSA) is disordered. The DRBM 1 domain maps to 72 to 162 (TPTVELNALC…AAKALRILQN (91 aa)). Arginine 108 bears the Asymmetric dimethylarginine mark. Arginine 115 is modified (asymmetric dimethylarginine; alternate). Position 115 is an omega-N-methylarginine; alternate (arginine 115). At serine 176 the chain carries Phosphoserine. Positions 184 to 251 (SEISQVFEIA…AIAVLEELKK (68 aa)) constitute a DRBM 2 domain. Serine 278 is subject to Phosphoserine. The DRBM 3 domain maps to 286 to 354 (NPISRLAQIQ…AENMLEILGF (69 aa)). The tract at residues 360 to 397 (QPTKPALKSEEKTPIKKPGDGRKVTFFEPGSGDENGTS) is disordered. The segment covering 366–384 (LKSEEKTPIKKPGDGRKVT) has biased composition (basic and acidic residues). At serine 390 the chain carries Phosphoserine.

Binds tubulin. Binds with low affinity single-stranded RNA or DNA homopolymers. Interacts with CASC3 in an RNA-dependent manner. Identified in a mRNP complex, at least composed of DHX9, DDX3X, ELAVL1, HNRNPU, IGF2BP1, ILF3, PABPC1, PCBP2, PTBP2, STAU1, STAU2, SYNCRIP and YBX1. In terms of assembly, (Microbial infection) Interacts with HERV-K rec and gag proteins. As to quaternary structure, (Microbial infection) Interacts with HIV-1 GAG polyprotein. (Microbial infection) Interacts with influenza virus NS1 protein. In terms of assembly, (Microbial infection) Interacts with Ebola virus NP, VP30 and VP35. In terms of tissue distribution, widely expressed. Expressed in brain, pancreas, heart, skeletal muscles, liver, lung, kidney and placenta.

The protein localises to the cytoplasm. Its subcellular location is the rough endoplasmic reticulum. Functionally, binds double-stranded RNA (regardless of the sequence) and tubulin. May play a role in specific positioning of mRNAs at given sites in the cell by cross-linking cytoskeletal and RNA components, and in stimulating their translation at the site. Its function is as follows. (Microbial infection) Plays a role in virus particles production of many viruses including of HIV-1, HERV-K, ebola virus and influenza virus. Acts by interacting with various viral proteins involved in particle budding process. This is Double-stranded RNA-binding protein Staufen homolog 1 (STAU1) from Homo sapiens (Human).